The sequence spans 441 residues: Protein eva-1 homolog C (441 aa).

The tract at residues Met-1–Arg-23 is disordered. An N-terminal signal peptide occupies residues Met-1–Ala-48. Over residues Ala-7–Val-16 the composition is skewed to pro residues. Over Leu-49–Ala-322 the chain is Extracellular. An N-linked (GlcNAc...) asparagine glycan is attached at Asn-62. Residues Ala-67–Gln-159 form the SUEL-type lectin 1 domain. Asn-165 carries an N-linked (GlcNAc...) asparagine glycan. Residues Val-168–Val-260 form the SUEL-type lectin 2 domain. Residues Ala-323–Ile-343 traverse the membrane as a helical segment. The Cytoplasmic portion of the chain corresponds to Arg-344 to Tyr-441. The tract at residues Val-362–Ser-391 is disordered. A compositionally biased stretch (acidic residues) spans Val-368 to Glu-383.

This sequence belongs to the EVA1 family.

The protein localises to the cell membrane. Binds heparin. The chain is Protein eva-1 homolog C (EVA1C) from Pan troglodytes (Chimpanzee).